A 473-amino-acid polypeptide reads, in one-letter code: MSDFMTEQEFRIEHDTMGEVKVPAQALWRAQTQRAVENFPISGRGLESAQIRAMGLLKAACAQVNKDSGALDAAKADAIIAAGKEIATGKHDAEFPIDVFQTGSGTSSNMNTNEVIASIAKANGTEVHPNDDVNMGQSSNDTFPTATHVAATEAAVNDLIPGLKVLHESLAKKANEWDSVVKSGRTHLMDAVPVTLGQEFGGYARQIQLGIERIEATLPRLGELAIGGTAVGTGINTSADFGGKVVAELVELTGVTQLQEAANHFEAQANRDALVEFSGAMRVVAVSLYKIANDIRLMGSGPLTGLGEIQLPDLQPGSSIMPGKVNPVLCETATQVSAQVIGNDAAVAFAGSQGQFELNVFIPVMARNVLESARLLANTARVFATRLVDGIVPNEEHMKQLAESSPSIVTPLNSAIGYEAAAKVAKAALAEGKTIRQTVIDMGFVDGEKLTEEELDKRLDVLAMANTDRKQKF.

Substrate-binding positions include 104 to 106 (SGT), 128 to 131 (HPND), 138 to 140 (SSN), and T186. H187 functions as the Proton donor/acceptor in the catalytic mechanism. S318 is an active-site residue. Substrate is bound by residues S319 and 324–326 (KVN).

It belongs to the class-II fumarase/aspartase family. Fumarase subfamily. Homotetramer.

It localises to the cytoplasm. It catalyses the reaction (S)-malate = fumarate + H2O. It participates in carbohydrate metabolism; tricarboxylic acid cycle; (S)-malate from fumarate: step 1/1. Functionally, involved in the TCA cycle. Catalyzes the stereospecific interconversion of fumarate to L-malate. The polypeptide is Fumarate hydratase class II (Corynebacterium efficiens (strain DSM 44549 / YS-314 / AJ 12310 / JCM 11189 / NBRC 100395)).